Here is a 127-residue protein sequence, read N- to C-terminus: Glycine cleavage system H protein (127 aa).

Residues 22–104 (AVVIGITHFA…YEGAWMVKVE (83 aa)) enclose the Lipoyl-binding domain. K63 carries the N6-lipoyllysine modification.

The protein belongs to the GcvH family. As to quaternary structure, the glycine cleavage system is composed of four proteins: P, T, L and H. (R)-lipoate is required as a cofactor.

Its function is as follows. The glycine cleavage system catalyzes the degradation of glycine. The H protein shuttles the methylamine group of glycine from the P protein to the T protein. Functionally, is also involved in protein lipoylation via its role as an octanoyl/lipoyl carrier protein intermediate. The polypeptide is Glycine cleavage system H protein (Bacillus mycoides (strain KBAB4) (Bacillus weihenstephanensis)).